The sequence spans 618 residues: MAKVIGIDLGTTNSCVSVMEGGNPVVITNSEGARTTPSVVSFQDNGERLVGQIAKRQAITNPHKTIMSIKRYMGTDHKETIDGKEYTPQELSAIILQKLKADAEAYLGGTVTQAVITVPAYFNDSQRQATKDAGRIAGLEVLRIINEPTAASLAYGLDKMDTNQKILVYDLGGGTFDVSILELGDGVFEVKSTNGNTKLGGDDFDQRIIDHIAETFKKDSGIDLRTDKMALQRLKEAAEKAKIELSSSTQTNINLPFITADATGPKHIDMNLTRAKFNELTQDLVEGTLTPMKKALQDAEMSIGEIDKVILVGGSTRIPAVQDAVKNFTGKEPSKDVNPDECVAMGAAVQAGVLTGDVKDVLLLDVTPLTLGIETLGGVATPLIERNTTIPTRKSQVFSTAADGQTSVEIHVVQGERQMAADNKTLGRFTLSGIAPAPRGIPQIEVTFDIDANGIVNVSAKDKGTGKEANITITASTNLSDDEVEKAVNDAKKFEEEDKKRKESVEVKNNAEQIFYQTEKTLNELGDKVSAEDKATIEEKLNALKGVKDGEDIEAIKKATEDLTQAFYQISSKIYQDAGAPGAEGFDSNMAGEANAGQNANNDDNVVDADYKVEDDEK.

Phosphothreonine; by autocatalysis is present on Thr-175. Residues 579-618 form a disordered region; that stretch reads GAPGAEGFDSNMAGEANAGQNANNDDNVVDADYKVEDDEK. A compositionally biased stretch (low complexity) spans 591–604; that stretch reads AGEANAGQNANNDD.

The protein belongs to the heat shock protein 70 family.

Acts as a chaperone. The sequence is that of Chaperone protein DnaK from Clostridium tetani (strain Massachusetts / E88).